A 72-amino-acid polypeptide reads, in one-letter code: SPbeta prophage-derived uncharacterized protein YoqN (72 aa).

This is SPbeta prophage-derived uncharacterized protein YoqN (yoqN) from Bacillus subtilis (strain 168).